A 491-amino-acid chain; its full sequence is Probable allantoate deiminase (491 aa).

Residues 1-32 (MALLLSYPRRHPSIHLLILSAYALFLLPILDG) form the signal peptide. An N-linked (GlcNAc...) asparagine glycan is attached at Asn-109. Mn(2+) contacts are provided by His-120, Asp-131, Glu-168, and His-234. Residues Asn-265 and Asn-343 are each glycosylated (N-linked (GlcNAc...) asparagine). Mn(2+) is bound at residue His-454.

The protein belongs to the peptidase M20A family. In terms of assembly, homodimer. Mn(2+) serves as cofactor.

It is found in the endoplasmic reticulum. It carries out the reaction allantoate + H2O + 2 H(+) = (S)-2-ureidoglycine + NH4(+) + CO2. Functionally, involved in the catabolism of purine nucleotides. The sequential activity of AAH, UGLYAH and UAH allows a complete purine breakdown without the intermediate generation of urea. The polypeptide is Probable allantoate deiminase (Oryza sativa subsp. japonica (Rice)).